An 88-amino-acid polypeptide reads, in one-letter code: Translation initiation factor IF-1 2 (88 aa).

The S1-like domain occupies 1–72 (MAKEELIEMQ…TKGRITFRHL (72 aa)).

It belongs to the IF-1 family. In terms of assembly, component of the 30S ribosomal translation pre-initiation complex which assembles on the 30S ribosome in the order IF-2 and IF-3, IF-1 and N-formylmethionyl-tRNA(fMet); mRNA recruitment can occur at any time during PIC assembly.

The protein resides in the cytoplasm. Its function is as follows. One of the essential components for the initiation of protein synthesis. Stabilizes the binding of IF-2 and IF-3 on the 30S subunit to which N-formylmethionyl-tRNA(fMet) subsequently binds. Helps modulate mRNA selection, yielding the 30S pre-initiation complex (PIC). Upon addition of the 50S ribosomal subunit IF-1, IF-2 and IF-3 are released leaving the mature 70S translation initiation complex. This chain is Translation initiation factor IF-1 2, found in Acidovorax sp. (strain JS42).